The primary structure comprises 488 residues: Poly(3-hydroxybutyrate) depolymerase (488 aa).

The N-terminal stretch at 1–27 (MVRRLWRRIAGWLAACVAILCAFPLHA) is a signal peptide. Catalysis depends on S166, which acts as the Charge relay system. Residues 346–428 (APTGLAVTAT…AAVSATTKSA (83 aa)) form the Fibronectin type-III domain.

Belongs to the AB hydrolase superfamily. Lipase family.

It localises to the secreted. The catalysed reaction is [(3R)-hydroxybutanoate](n) + H2O = [(3R)-hydroxybutanoate](n-2) + (3R)-hydroxybutanoate dimer + H(+). The enzyme catalyses [(3R)-hydroxybutanoate](n) + H2O = [(3R)-hydroxybutanoate](n-3) + (3R)-hydroxybutanoate trimer + H(+). It catalyses the reaction [(3R)-hydroxybutanoate](n) + H2O = [(3R)-hydroxybutanoate](n-1) + (R)-3-hydroxybutanoate + H(+). It carries out the reaction [(3R)-hydroxybutanoate](n) + H2O = [(3R)-hydroxybutanoate](n-5) + (3R)-hydroxybutanoate pentamer + H(+). The catalysed reaction is [(3R)-hydroxybutanoate](n) + H2O = [(3R)-hydroxybutanoate](n-4) + (3R)-hydroxybutanoate tetramer + H(+). Functionally, this protein degrades water-insoluble and water-soluble PHB to monomeric D(-)-3-hydroxybutyrate. The protein is Poly(3-hydroxybutyrate) depolymerase of Ralstonia pickettii (Burkholderia pickettii).